We begin with the raw amino-acid sequence, 430 residues long: Tol-Pal system protein TolB (430 aa).

An N-terminal signal peptide occupies residues 1-21; it reads MKQAFRVALGFLILWASVLHA.

The protein belongs to the TolB family. In terms of assembly, the Tol-Pal system is composed of five core proteins: the inner membrane proteins TolA, TolQ and TolR, the periplasmic protein TolB and the outer membrane protein Pal. They form a network linking the inner and outer membranes and the peptidoglycan layer.

It localises to the periplasm. Part of the Tol-Pal system, which plays a role in outer membrane invagination during cell division and is important for maintaining outer membrane integrity. TolB occupies a key intermediary position in the Tol-Pal system because it communicates directly with both membrane-embedded components, Pal in the outer membrane and TolA in the inner membrane. This chain is Tol-Pal system protein TolB, found in Serratia proteamaculans (strain 568).